A 188-amino-acid chain; its full sequence is Peptidyl-tRNA hydrolase (188 aa).

A tRNA-binding site is contributed by tyrosine 14. Histidine 19 (proton acceptor) is an active-site residue. TRNA is bound by residues tyrosine 64, asparagine 66, and asparagine 112.

It belongs to the PTH family. As to quaternary structure, monomer.

It is found in the cytoplasm. It catalyses the reaction an N-acyl-L-alpha-aminoacyl-tRNA + H2O = an N-acyl-L-amino acid + a tRNA + H(+). Its function is as follows. Hydrolyzes ribosome-free peptidyl-tRNAs (with 1 or more amino acids incorporated), which drop off the ribosome during protein synthesis, or as a result of ribosome stalling. In terms of biological role, catalyzes the release of premature peptidyl moieties from peptidyl-tRNA molecules trapped in stalled 50S ribosomal subunits, and thus maintains levels of free tRNAs and 50S ribosomes. This is Peptidyl-tRNA hydrolase from Bacillus pumilus (strain SAFR-032).